The primary structure comprises 263 residues: Probable methylthioribulose-1-phosphate dehydratase (263 aa).

Residue Cys102 participates in substrate binding. Zn(2+) is bound by residues His120 and His122. Glu144 (proton donor/acceptor) is an active-site residue. His200 contributes to the Zn(2+) binding site.

Belongs to the aldolase class II family. MtnB subfamily. Zn(2+) is required as a cofactor.

It localises to the cytoplasm. The catalysed reaction is 5-(methylsulfanyl)-D-ribulose 1-phosphate = 5-methylsulfanyl-2,3-dioxopentyl phosphate + H2O. Its pathway is amino-acid biosynthesis; L-methionine biosynthesis via salvage pathway; L-methionine from S-methyl-5-thio-alpha-D-ribose 1-phosphate: step 2/6. Functionally, catalyzes the dehydration of methylthioribulose-1-phosphate (MTRu-1-P) into 2,3-diketo-5-methylthiopentyl-1-phosphate (DK-MTP-1-P). This chain is Probable methylthioribulose-1-phosphate dehydratase, found in Caenorhabditis elegans.